Reading from the N-terminus, the 71-residue chain is ATP synthase F(0) complex subunit e, mitochondrial (71 aa).

K34 is subject to N6-acetyllysine. The residue at position 68 (S68) is a Phosphoserine.

It belongs to the ATPase e subunit family. Component of the ATP synthase complex composed at least of ATP5F1A/subunit alpha, ATP5F1B/subunit beta, ATP5MC1/subunit c (homooctomer), MT-ATP6/subunit a, MT-ATP8/subunit 8, ATP5ME/subunit e, ATP5MF/subunit f, ATP5MG/subunit g, ATP5MK/subunit k, ATP5MJ/subunit j, ATP5F1C/subunit gamma, ATP5F1D/subunit delta, ATP5F1E/subunit epsilon, ATP5PF/subunit F6, ATP5PB/subunit b, ATP5PD/subunit d, ATP5PO/subunit OSCP. ATP synthase complex consists of a soluble F(1) head domain (subunits alpha(3) and beta(3)) - the catalytic core - and a membrane F(0) domain - the membrane proton channel (subunits c, a, 8, e, f, g, k and j). These two domains are linked by a central stalk (subunits gamma, delta, and epsilon) rotating inside the F1 region and a stationary peripheral stalk (subunits F6, b, d, and OSCP).

It localises to the mitochondrion. The protein resides in the mitochondrion inner membrane. In terms of biological role, subunit e, of the mitochondrial membrane ATP synthase complex (F(1)F(0) ATP synthase or Complex V) that produces ATP from ADP in the presence of a proton gradient across the membrane which is generated by electron transport complexes of the respiratory chain. ATP synthase complex consist of a soluble F(1) head domain - the catalytic core - and a membrane F(1) domain - the membrane proton channel. These two domains are linked by a central stalk rotating inside the F(1) region and a stationary peripheral stalk. During catalysis, ATP synthesis in the catalytic domain of F(1) is coupled via a rotary mechanism of the central stalk subunits to proton translocation. In vivo, can only synthesize ATP although its ATP hydrolase activity can be activated artificially in vitro. Part of the complex F(0) domain. The chain is ATP synthase F(0) complex subunit e, mitochondrial from Rattus norvegicus (Rat).